Reading from the N-terminus, the 421-residue chain is Putative NBPF family member NBPF7 (421 aa).

Residues 87-143 (IKSMLREELQFKEEKLAEQLKQAEELRQYKVLVHSQERELIQLREKLREGRDASHSL) are a coiled coil. Disordered regions lie at residues 179–251 (VHKL…KITS), 312–334 (EKEVLQDSPEERVTTSCSDHDVS), and 402–421 (YNSKPSSIPNTTLQGSFTED). 2 consecutive Olduvai domains span residues 190–279 (EDEN…NILL) and 280–391 (ENQN…RMSQ). Over residues 194 to 217 (DKTKELDKVQESPAPREEQKAEEK) the composition is skewed to basic and acidic residues. The segment covering 230-243 (TYSNSHGPSDSNPP) has biased composition (polar residues). The segment covering 312-333 (EKEVLQDSPEERVTTSCSDHDV) has biased composition (basic and acidic residues). The span at 403 to 421 (NSKPSSIPNTTLQGSFTED) shows a compositional bias: polar residues.

The protein belongs to the NBPF family.

The protein localises to the cytoplasm. The chain is Putative NBPF family member NBPF7 from Homo sapiens (Human).